The primary structure comprises 345 residues: Protein RecA (345 aa).

Residue 65–72 (GPESSGKT) coordinates ATP.

This sequence belongs to the RecA family.

It localises to the cytoplasm. Its function is as follows. Can catalyze the hydrolysis of ATP in the presence of single-stranded DNA, the ATP-dependent uptake of single-stranded DNA by duplex DNA, and the ATP-dependent hybridization of homologous single-stranded DNAs. It interacts with LexA causing its activation and leading to its autocatalytic cleavage. The protein is Protein RecA of Hahella chejuensis (strain KCTC 2396).